Reading from the N-terminus, the 449-residue chain is L-seryl-tRNA(Sec) selenium transferase (449 aa).

Lys286 bears the N6-(pyridoxal phosphate)lysine mark.

It belongs to the SelA family. Pyridoxal 5'-phosphate serves as cofactor.

It localises to the cytoplasm. The catalysed reaction is L-seryl-tRNA(Sec) + selenophosphate + H(+) = L-selenocysteinyl-tRNA(Sec) + phosphate. It functions in the pathway aminoacyl-tRNA biosynthesis; selenocysteinyl-tRNA(Sec) biosynthesis; selenocysteinyl-tRNA(Sec) from L-seryl-tRNA(Sec) (bacterial route): step 1/1. In terms of biological role, converts seryl-tRNA(Sec) to selenocysteinyl-tRNA(Sec) required for selenoprotein biosynthesis. This Sulfurimonas denitrificans (strain ATCC 33889 / DSM 1251) (Thiomicrospira denitrificans (strain ATCC 33889 / DSM 1251)) protein is L-seryl-tRNA(Sec) selenium transferase.